We begin with the raw amino-acid sequence, 117 residues long: Ig heavy chain V region 102 (117 aa).

An N-terminal signal peptide occupies residues 1–19; that stretch reads MGWSCIILFLVATATGVHS. A framework-1 region spans residues 20-49; the sequence is HVQLQQPGAELVKPGASVKVSCKASGYTFT. A disulfide bridge links Cys41 with Cys115. The segment at 50-54 is complementarity-determining-1; sequence SYWMH. A framework-2 region spans residues 55-68; the sequence is WVKQRPGQGLEWIG. The tract at residues 69–85 is complementarity-determining-2; sequence RIHPSDSDTNYNQKFKG. Residues 86-117 are framework-3; it reads KATLTVDKSSSTAYMQLSSLTSEDSAVYYCAI.

The polypeptide is Ig heavy chain V region 102 (Mus musculus (Mouse)).